The following is a 78-amino-acid chain: Translation initiation factor IF-1, chloroplastic (78 aa).

In terms of domain architecture, S1-like spans 1–72; it reads MKKQNLIEME…TKGRITYRLR (72 aa).

Belongs to the IF-1 family. As to quaternary structure, component of the 30S ribosomal translation pre-initiation complex which assembles on the 30S ribosome in the order IF-2 and IF-3, IF-1 and N-formylmethionyl-tRNA(fMet); mRNA recruitment can occur at any time during PIC assembly.

It localises to the plastid. The protein resides in the chloroplast. Its function is as follows. One of the essential components for the initiation of protein synthesis. Stabilizes the binding of IF-2 and IF-3 on the 30S subunit to which N-formylmethionyl-tRNA(fMet) subsequently binds. Helps modulate mRNA selection, yielding the 30S pre-initiation complex (PIC). Upon addition of the 50S ribosomal subunit IF-1, IF-2 and IF-3 are released leaving the mature 70S translation initiation complex. The protein is Translation initiation factor IF-1, chloroplastic of Chaetosphaeridium globosum (Charophycean green alga).